A 151-amino-acid polypeptide reads, in one-letter code: MYAIIRLRGEVNTKPAIRDTLSMLRLHRVNHCVFVREDEHYRGMIQVVKDYVAWGKADADLLTMILEKRGRLSGNRRLTDEVVREISPYKSIRELAEAVCAGAASLKDFGIKPVFRLHPPRKGHRGIKKTVKEGGELGYHESIAELIKKMR.

The protein belongs to the universal ribosomal protein uL30 family. In terms of assembly, part of the 50S ribosomal subunit.

The protein is Large ribosomal subunit protein uL30 of Methanothrix thermoacetophila (strain DSM 6194 / JCM 14653 / NBRC 101360 / PT) (Methanosaeta thermophila).